Here is a 1061-residue protein sequence, read N- to C-terminus: Translation initiation factor IF-2 (1061 aa).

Disordered regions lie at residues 51 to 199 and 250 to 460; these read FARG…VAVK and AFQA…IPTE. The span at 67-77 shows a compositional bias: basic and acidic residues; it reads NEPKPKIDWSR. 5 stretches are compositionally biased toward low complexity: residues 97-113, 120-130, 167-177, 184-199, and 250-278; these read VAAA…KAPV, RPSAPRPAVTA, VPQPRQPSAVV, TPAI…VAVK, and AFQA…AEAP. The span at 279–291 shows a compositional bias: pro residues; the sequence is PVAPEKPAVPAPP. Residues 340 to 360 are compositionally biased toward gly residues; sequence SPGGPGGPGGGYGQRPSGPGG. Positions 381 to 391 are enriched in low complexity; sequence GFNNGPRPGFG. Over residues 392 to 405 the composition is skewed to gly residues; the sequence is QRPGGFGQRPGMGA. The 177-residue stretch at 552 to 728 folds into the tr-type G domain; that stretch reads SRPPVVTVMG…CLVADLGNLK (177 aa). Residues 561-568 form a G1 region; it reads GHVDHGKT. 561–568 is a GTP binding site; it reads GHVDHGKT. The tract at residues 586-590 is G2; it reads GITQH. A G3 region spans residues 614–617; sequence DTPG. GTP-binding positions include 614 to 618 and 668 to 671; these read DTPGH and NKID. A G4 region spans residues 668 to 671; that stretch reads NKID. The G5 stretch occupies residues 704-706; the sequence is SAK.

Belongs to the TRAFAC class translation factor GTPase superfamily. Classic translation factor GTPase family. IF-2 subfamily.

The protein resides in the cytoplasm. In terms of biological role, one of the essential components for the initiation of protein synthesis. Protects formylmethionyl-tRNA from spontaneous hydrolysis and promotes its binding to the 30S ribosomal subunits. Also involved in the hydrolysis of GTP during the formation of the 70S ribosomal complex. The protein is Translation initiation factor IF-2 of Acidobacterium capsulatum (strain ATCC 51196 / DSM 11244 / BCRC 80197 / JCM 7670 / NBRC 15755 / NCIMB 13165 / 161).